Reading from the N-terminus, the 441-residue chain is uncharacterized protein (441 aa).

This is an uncharacterized protein from Ictalurid herpesvirus 1 (strain Auburn) (IcHV-1).